Reading from the N-terminus, the 167-residue chain is Phospholipase A2 imperatoxin-1 (167 aa).

Residues Trp-38, Gly-40, and Gly-42 each contribute to the Ca(2+) site. Intrachain disulfides connect Cys-39/Cys-61, Cys-60/Cys-99, Cys-67/Cys-92, Cys-90/Cys-127, and Cys-132/Cys-144. His-64 is an active-site residue. Asp-65 is a Ca(2+) binding site. Asn-102 carries an N-linked (GlcNAc...) asparagine glycan. A propeptide spanning residues 136-140 (RRLAR) is cleaved from the precursor.

Belongs to the phospholipase A2 family. Group III subfamily. As to quaternary structure, heterodimer composed of a large subunit and a small subunit; disulfide-linked. The cofactor is Ca(2+). In terms of tissue distribution, expressed by the venom gland.

Its subcellular location is the secreted. It catalyses the reaction a 1,2-diacyl-sn-glycero-3-phosphocholine + H2O = a 1-acyl-sn-glycero-3-phosphocholine + a fatty acid + H(+). Its function is as follows. Phospholipase toxin, which may catalyze the calcium-dependent hydrolysis of the 2-acyl groups in 3-sn-phosphoglycerides. Inhibits both skeletal (RYR1) and cardiac (RYR2) ryanodine receptors (calcium release channels). Probably blocks ryanodine receptors by generating a lipid product. In Pandinus imperator (Emperor scorpion), this protein is Phospholipase A2 imperatoxin-1.